A 133-amino-acid polypeptide reads, in one-letter code: ATP synthase epsilon chain (133 aa).

Belongs to the ATPase epsilon chain family. As to quaternary structure, F-type ATPases have 2 components, CF(1) - the catalytic core - and CF(0) - the membrane proton channel. CF(1) has five subunits: alpha(3), beta(3), gamma(1), delta(1), epsilon(1). CF(0) has three main subunits: a, b and c.

It localises to the cell inner membrane. In terms of biological role, produces ATP from ADP in the presence of a proton gradient across the membrane. The protein is ATP synthase epsilon chain of Maricaulis maris (strain MCS10) (Caulobacter maris).